Here is a 301-residue protein sequence, read N- to C-terminus: N-acetylmuramic acid 6-phosphate etherase (301 aa).

Residues 57 to 220 (VVERLRAGGR…STISMVRLGK (164 aa)) form the SIS domain. Glutamate 85 functions as the Proton donor in the catalytic mechanism. Glutamate 116 is a catalytic residue.

This sequence belongs to the GCKR-like family. MurNAc-6-P etherase subfamily. In terms of assembly, homodimer.

The enzyme catalyses N-acetyl-D-muramate 6-phosphate + H2O = N-acetyl-D-glucosamine 6-phosphate + (R)-lactate. The protein operates within amino-sugar metabolism; N-acetylmuramate degradation. In terms of biological role, specifically catalyzes the cleavage of the D-lactyl ether substituent of MurNAc 6-phosphate, producing GlcNAc 6-phosphate and D-lactate. This is N-acetylmuramic acid 6-phosphate etherase from Rubrobacter xylanophilus (strain DSM 9941 / JCM 11954 / NBRC 16129 / PRD-1).